The chain runs to 186 residues: Putative glutathione-dependent formaldehyde-activating enzyme (186 aa).

Residues 20-166 (FSGGKLRCKC…FKSIGLETYD (147 aa)) form the CENP-V/GFA domain. Residues Cys-27, Cys-29, Cys-48, Cys-50, Cys-53, Cys-95, and Cys-98 each coordinate Zn(2+).

This sequence belongs to the Gfa family. It depends on Zn(2+) as a cofactor.

The enzyme catalyses S-(hydroxymethyl)glutathione = glutathione + formaldehyde. It participates in one-carbon metabolism; formaldehyde degradation; formate from formaldehyde (glutathione route): step 1/3. Its function is as follows. Catalyzes the condensation of formaldehyde and glutathione to S-hydroxymethylglutathione. This is Putative glutathione-dependent formaldehyde-activating enzyme from Fusarium vanettenii (strain ATCC MYA-4622 / CBS 123669 / FGSC 9596 / NRRL 45880 / 77-13-4) (Fusarium solani subsp. pisi).